An 827-amino-acid chain; its full sequence is Valine--tRNA ligase (827 aa).

The 'HIGH' region signature appears at P41–H51. Positions K511–S515 match the 'KMSKS' region motif. K514 serves as a coordination point for ATP. The stretch at E765–E827 forms a coiled coil.

It belongs to the class-I aminoacyl-tRNA synthetase family. ValS type 1 subfamily. As to quaternary structure, monomer.

The protein localises to the cytoplasm. The enzyme catalyses tRNA(Val) + L-valine + ATP = L-valyl-tRNA(Val) + AMP + diphosphate. Its function is as follows. Catalyzes the attachment of valine to tRNA(Val). As ValRS can inadvertently accommodate and process structurally similar amino acids such as threonine, to avoid such errors, it has a 'posttransfer' editing activity that hydrolyzes mischarged Thr-tRNA(Val) in a tRNA-dependent manner. This is Valine--tRNA ligase from Mycoplasmopsis pulmonis (strain UAB CTIP) (Mycoplasma pulmonis).